Consider the following 313-residue polypeptide: Probable F-box protein At3g44130 (313 aa).

Positions 1-46 constitute an F-box domain; sequence MASGNLPWELEEEILCRLPLGSLVRLRSVCKHWNDFFNDKWFIKKS.

This chain is Probable F-box protein At3g44130, found in Arabidopsis thaliana (Mouse-ear cress).